We begin with the raw amino-acid sequence, 83 residues long: Mu-theraphotoxin-Hhn2o (83 aa).

The N-terminal stretch at 1-21 is a signal peptide; that stretch reads MKASMFLALAGLVLLFVVGYA. A propeptide spanning residues 22-48 is cleaved from the precursor; it reads SESEEKEFPIELLSKIFAVDVFKGEER. 3 disulfides stabilise this stretch: Cys-50–Cys-65, Cys-57–Cys-70, and Cys-64–Cys-77. Leu-81 carries the leucine amide modification.

The protein belongs to the neurotoxin 10 (Hwtx-1) family. 15 (Hntx-3) subfamily. As to quaternary structure, monomer. As to expression, expressed by the venom gland.

It is found in the secreted. Functionally, lethal neurotoxin. Selectively blocks tetrodotoxin-sensitive voltage-gated sodium channels (Nav). Does not affect tetrodotoxin-resistant voltage-gated sodium channels or calcium channels. The protein is Mu-theraphotoxin-Hhn2o of Cyriopagopus hainanus (Chinese bird spider).